We begin with the raw amino-acid sequence, 228 residues long: Ribose-5-phosphate isomerase A (228 aa).

Substrate contacts are provided by residues 26 to 29 (SGST), 81 to 84 (DGAD), and 94 to 97 (KGGG). E103 functions as the Proton acceptor in the catalytic mechanism. K121 lines the substrate pocket.

The protein belongs to the ribose 5-phosphate isomerase family. As to quaternary structure, homodimer.

It catalyses the reaction aldehydo-D-ribose 5-phosphate = D-ribulose 5-phosphate. Its pathway is carbohydrate degradation; pentose phosphate pathway; D-ribose 5-phosphate from D-ribulose 5-phosphate (non-oxidative stage): step 1/1. Catalyzes the reversible conversion of ribose-5-phosphate to ribulose 5-phosphate. This Shouchella clausii (strain KSM-K16) (Alkalihalobacillus clausii) protein is Ribose-5-phosphate isomerase A.